A 5381-amino-acid chain; its full sequence is Protein purity of essence (5381 aa).

Disordered regions lie at residues 140–174 (KHPE…PKLE), 339–364 (QQQT…TSKD), 599–621 (SPET…QKSA), 683–709 (RNDS…SSGS), 1162–1212 (SGGD…STET), and 1632–1659 (QAAQ…QSER). Over residues 339 to 350 (QQQTAAAASTSQ) the composition is skewed to low complexity. Low complexity-rich tracts occupy residues 690-709 (SPPS…SSGS) and 1167-1176 (SSCTSAASSS). Positions 1632–1646 (QAAQPNPSEESSQAC) are enriched in polar residues. Over residues 1647-1658 (DHSEGGEQRQSE) the composition is skewed to basic and acidic residues. Residues 1815-1884 (KLCTFSQTQK…EDGSCQALSR (70 aa)) form a UBR-type zinc finger. 6 disordered regions span residues 1917–1939 (KRSN…KDSI), 2443–2479 (KNTT…KQLT), 2632–2652 (PDDS…TATQ), 3037–3143 (VSAG…DNNE), 3537–3562 (KQQQ…DREK), and 4247–4280 (HHQQ…KEAA). Polar residues-rich tracts occupy residues 1920 to 1930 (NTAPGATQQQH), 2470 to 2479 (SSQQHQKQLT), 2643 to 2652 (SGPTPVTATQ), and 3048 to 3058 (NVATDGSTLRT). The span at 3065-3075 (GSGGSESGGSG) shows a compositional bias: gly residues. The segment covering 3084–3104 (ARSSNFGDHPNTTPPRQSCSS) has biased composition (polar residues). Residues 3119–3132 (SGSGGSASVPGGGL) show a composition bias toward gly residues. A UBR4 E3 catalytic module region spans residues 4904–5374 (PSLKYILRFL…SFIEDLLASL (471 aa)). The HemiRING-type zinc-finger motif lies at 5022–5136 (GLTCFICREG…SSYMQESTQR (115 aa)). Cys5025, Cys5028, His5074, and Cys5077 together coordinate Zn(2+). Residues 5139-5374 (ISYTSSIHDL…SFIEDLLASL (236 aa)) enclose the UZI domain.

This sequence belongs to the UBR4 family.

Its function is as follows. Has a role in growth of the perineurial glial layer of the larval peripheral nerve. May have a role in male fertility and eye development or function. May bind calmodulin. The sequence is that of Protein purity of essence from Drosophila pseudoobscura pseudoobscura (Fruit fly).